The sequence spans 1104 residues: Lon protease homolog, mitochondrial (1104 aa).

A mitochondrion-targeting transit peptide spans 1–58 (MLPLRAFARLAQRPRLSRPTQLARSSLPRPSPSRPAAHYLALAPAPSTRFLHSSPPVL). 2 disordered regions span residues 8–144 (ARLA…KEVA) and 275–295 (EGSQDSAKGEGEVKSFESEVP). Positions 22 to 46 (LARSSLPRPSPSRPAAHYLALAPAP) are enriched in low complexity. Residues 80-103 (KQDDQVEKPLPDAESSKSAEERAK) show a composition bias toward basic and acidic residues. Over residues 104 to 128 (SQSSKPDIKASSSDSVSSSAPAPGS) the composition is skewed to low complexity. The span at 129–139 (ADGGSPPGAGG) shows a compositional bias: gly residues. The Lon N-terminal domain maps to 155–444 (VLAIPITHRP…RALVLLKKEL (290 aa)). Residues 281 to 291 (AKGEGEVKSFE) show a composition bias toward basic and acidic residues. 597–604 (GPPGVGKT) serves as a coordination point for ATP. Positions 895–1082 (SPPAGVSTGL…RQVLHEAFRG (188 aa)) constitute a Lon proteolytic domain. Residues Ser-987 and Lys-1030 contribute to the active site.

This sequence belongs to the peptidase S16 family. Homohexamer or homoheptamer. Organized in a ring with a central cavity.

It is found in the mitochondrion matrix. The catalysed reaction is Hydrolysis of proteins in presence of ATP.. Functionally, ATP-dependent serine protease that mediates the selective degradation of misfolded, unassembled or oxidatively damaged polypeptides as well as certain short-lived regulatory proteins in the mitochondrial matrix. May also have a chaperone function in the assembly of inner membrane protein complexes. Participates in the regulation of mitochondrial gene expression and in the maintenance of the integrity of the mitochondrial genome. Binds to mitochondrial DNA in a site-specific manner. The chain is Lon protease homolog, mitochondrial from Cryptococcus neoformans var. neoformans serotype D (strain JEC21 / ATCC MYA-565) (Filobasidiella neoformans).